A 362-amino-acid chain; its full sequence is Probable tocopherol O-methyltransferase, chloroplastic (362 aa).

The transit peptide at 1–55 directs the protein to the chloroplast; sequence MAHAAAATGALAPLHPLLRCTSRHLCASASPRAGLCLHHHRRRRRSSRRTKLAVR. The segment at 141 to 150 is SAM motif I; that stretch reads VVDVGCGIGG. Residues 204-212 form an SAM motif II region; it reads GQFDLVWSM. Residues 231–240 are SAM motif III; sequence VAAPGARIII.

It belongs to the class I-like SAM-binding methyltransferase superfamily. gTMT family.

It localises to the plastid. It is found in the chloroplast. The catalysed reaction is gamma-tocopherol + S-adenosyl-L-methionine = (+)-alpha-tocopherol + S-adenosyl-L-homocysteine + H(+). The enzyme catalyses delta-tocotrienol + S-adenosyl-L-methionine = beta-tocotrienol + S-adenosyl-L-homocysteine + H(+). It carries out the reaction gamma-tocotrienol + S-adenosyl-L-methionine = alpha-tocotrienol + S-adenosyl-L-homocysteine + H(+). It catalyses the reaction delta-tocopherol + S-adenosyl-L-methionine = beta-tocopherol + S-adenosyl-L-homocysteine + H(+). It functions in the pathway cofactor biosynthesis; tocopherol biosynthesis. In terms of biological role, involved in the synthesis of tocopherol (vitamin E). Methylates gamma- and delta-tocopherol to form beta- and alpha-tocopherol, respectively. The sequence is that of Probable tocopherol O-methyltransferase, chloroplastic (VTE4) from Oryza sativa subsp. japonica (Rice).